The primary structure comprises 227 residues: Cytochrome c oxidase subunit 2 (227 aa).

Residues 1-14 are Mitochondrial intermembrane-facing; it reads MANHSQLGFQDASS. The chain crosses the membrane as a helical span at residues 15–45; that stretch reads PIMEELVEFHDHALMVALAICSLVLYLLTLM. Residues 46–58 lie on the Mitochondrial matrix side of the membrane; sequence LMEKLSSNTVDAQ. Residues 59-86 traverse the membrane as a helical segment; it reads EVELIWTILPAIVLVLLALPSLQILYMM. At 87-227 the chain is on the mitochondrial intermembrane side; it reads DEIDEPDLTL…FEAWSSLLSS (141 aa). Cu cation is bound by residues histidine 160, cysteine 195, glutamate 197, cysteine 199, histidine 203, and methionine 206. Glutamate 197 contributes to the Mg(2+) binding site.

This sequence belongs to the cytochrome c oxidase subunit 2 family. In terms of assembly, component of the cytochrome c oxidase (complex IV, CIV), a multisubunit enzyme composed of 14 subunits. The complex is composed of a catalytic core of 3 subunits MT-CO1, MT-CO2 and MT-CO3, encoded in the mitochondrial DNA, and 11 supernumerary subunits COX4I, COX5A, COX5B, COX6A, COX6B, COX6C, COX7A, COX7B, COX7C, COX8 and NDUFA4, which are encoded in the nuclear genome. The complex exists as a monomer or a dimer and forms supercomplexes (SCs) in the inner mitochondrial membrane with NADH-ubiquinone oxidoreductase (complex I, CI) and ubiquinol-cytochrome c oxidoreductase (cytochrome b-c1 complex, complex III, CIII), resulting in different assemblies (supercomplex SCI(1)III(2)IV(1) and megacomplex MCI(2)III(2)IV(2)). Found in a complex with TMEM177, COA6, COX18, COX20, SCO1 and SCO2. Interacts with TMEM177 in a COX20-dependent manner. Interacts with COX20. Interacts with COX16. Cu cation serves as cofactor.

The protein localises to the mitochondrion inner membrane. It carries out the reaction 4 Fe(II)-[cytochrome c] + O2 + 8 H(+)(in) = 4 Fe(III)-[cytochrome c] + 2 H2O + 4 H(+)(out). Its function is as follows. Component of the cytochrome c oxidase, the last enzyme in the mitochondrial electron transport chain which drives oxidative phosphorylation. The respiratory chain contains 3 multisubunit complexes succinate dehydrogenase (complex II, CII), ubiquinol-cytochrome c oxidoreductase (cytochrome b-c1 complex, complex III, CIII) and cytochrome c oxidase (complex IV, CIV), that cooperate to transfer electrons derived from NADH and succinate to molecular oxygen, creating an electrochemical gradient over the inner membrane that drives transmembrane transport and the ATP synthase. Cytochrome c oxidase is the component of the respiratory chain that catalyzes the reduction of oxygen to water. Electrons originating from reduced cytochrome c in the intermembrane space (IMS) are transferred via the dinuclear copper A center (CU(A)) of subunit 2 and heme A of subunit 1 to the active site in subunit 1, a binuclear center (BNC) formed by heme A3 and copper B (CU(B)). The BNC reduces molecular oxygen to 2 water molecules using 4 electrons from cytochrome c in the IMS and 4 protons from the mitochondrial matrix. The sequence is that of Cytochrome c oxidase subunit 2 (MT-CO2) from Gallus gallus (Chicken).